The sequence spans 475 residues: Aspartyl/glutamyl-tRNA(Asn/Gln) amidotransferase subunit B (475 aa).

The protein belongs to the GatB/GatE family. GatB subfamily. As to quaternary structure, heterotrimer of A, B and C subunits.

It catalyses the reaction L-glutamyl-tRNA(Gln) + L-glutamine + ATP + H2O = L-glutaminyl-tRNA(Gln) + L-glutamate + ADP + phosphate + H(+). It carries out the reaction L-aspartyl-tRNA(Asn) + L-glutamine + ATP + H2O = L-asparaginyl-tRNA(Asn) + L-glutamate + ADP + phosphate + 2 H(+). Its function is as follows. Allows the formation of correctly charged Asn-tRNA(Asn) or Gln-tRNA(Gln) through the transamidation of misacylated Asp-tRNA(Asn) or Glu-tRNA(Gln) in organisms which lack either or both of asparaginyl-tRNA or glutaminyl-tRNA synthetases. The reaction takes place in the presence of glutamine and ATP through an activated phospho-Asp-tRNA(Asn) or phospho-Glu-tRNA(Gln). The polypeptide is Aspartyl/glutamyl-tRNA(Asn/Gln) amidotransferase subunit B (Pediococcus pentosaceus (strain ATCC 25745 / CCUG 21536 / LMG 10740 / 183-1w)).